Reading from the N-terminus, the 918-residue chain is Sarcosine dehydrogenase, mitochondrial (918 aa).

Residues 1-13 (MASLSRALRVAAA) show a composition bias toward low complexity. The transit peptide at 1-22 (MASLSRALRVAAAHPRQSPTRG) directs the protein to the mitochondrion. Residues 1–40 (MASLSRALRVAAAHPRQSPTRGMGPCNLSSAAGPTAEKSV) are disordered. Lysine 38 is modified (N6-succinyllysine). Histidine 108 carries the post-translational modification Tele-8alpha-FAD histidine. An N6-acetyllysine; alternate modification is found at lysine 173. Residue lysine 173 is modified to N6-succinyllysine; alternate. Lysine 377 and lysine 391 each carry N6-succinyllysine. An N6-acetyllysine mark is found at lysine 559 and lysine 775. A Phosphotyrosine modification is found at tyrosine 777. N6-acetyllysine; alternate occurs at positions 802, 884, and 904. 3 positions are modified to N6-succinyllysine; alternate: lysine 802, lysine 884, and lysine 904.

This sequence belongs to the GcvT family. FAD is required as a cofactor. As to expression, expressed in pancreas, liver and kidney.

It is found in the mitochondrion matrix. It carries out the reaction (6S)-5,6,7,8-tetrahydrofolyl-(gamma-L-Glu)(n) + sarcosine + oxidized [electron-transfer flavoprotein] + H(+) = (6R)-5,10-methylenetetrahydrofolyl-(gamma-L-Glu)(n) + reduced [electron-transfer flavoprotein] + glycine. The protein operates within amine and polyamine degradation; sarcosine degradation; formaldehyde and glycine from sarcosine: step 1/1. In terms of biological role, catalyzes the last step of the oxidative degradation of choline to glycine. Converts sarcosine into glycine. This is Sarcosine dehydrogenase, mitochondrial from Homo sapiens (Human).